The chain runs to 191 residues: Large ribosomal subunit protein uL5 (191 aa).

Belongs to the universal ribosomal protein uL5 family. Part of the 50S ribosomal subunit; part of the 5S rRNA/L5/L18/L25 subcomplex. Contacts the 5S rRNA and the P site tRNA. Forms a bridge to the 30S subunit in the 70S ribosome.

Its function is as follows. This is one of the proteins that bind and probably mediate the attachment of the 5S RNA into the large ribosomal subunit, where it forms part of the central protuberance. In the 70S ribosome it contacts protein S13 of the 30S subunit (bridge B1b), connecting the 2 subunits; this bridge is implicated in subunit movement. Contacts the P site tRNA; the 5S rRNA and some of its associated proteins might help stabilize positioning of ribosome-bound tRNAs. The sequence is that of Large ribosomal subunit protein uL5 from Corynebacterium glutamicum (strain R).